Consider the following 110-residue polypeptide: Cell cycle protein GpsB (110 aa).

A coiled-coil region spans residues 32 to 73 (LDDVIKDYENYLEQIEKLQMENRRLQQALDKKESEASNVRNS).

It belongs to the GpsB family. Forms polymers through the coiled coil domains. Interacts with PBP1, MreC and EzrA.

It localises to the cytoplasm. Divisome component that associates with the complex late in its assembly, after the Z-ring is formed, and is dependent on DivIC and PBP2B for its recruitment to the divisome. Together with EzrA, is a key component of the system that regulates PBP1 localization during cell cycle progression. Its main role could be the removal of PBP1 from the cell pole after pole maturation is completed. Also contributes to the recruitment of PBP1 to the division complex. Not essential for septum formation. This chain is Cell cycle protein GpsB, found in Streptococcus agalactiae serotype Ia (strain ATCC 27591 / A909 / CDC SS700).